A 227-amino-acid chain; its full sequence is NAD(P)H-quinone oxidoreductase subunit K, chloroplastic (227 aa).

Positions 43, 44, 108, and 139 each coordinate [4Fe-4S] cluster.

The protein belongs to the complex I 20 kDa subunit family. As to quaternary structure, NDH is composed of at least 16 different subunits, 5 of which are encoded in the nucleus. [4Fe-4S] cluster is required as a cofactor.

The protein resides in the plastid. It is found in the chloroplast thylakoid membrane. It catalyses the reaction a plastoquinone + NADH + (n+1) H(+)(in) = a plastoquinol + NAD(+) + n H(+)(out). The enzyme catalyses a plastoquinone + NADPH + (n+1) H(+)(in) = a plastoquinol + NADP(+) + n H(+)(out). Functionally, NDH shuttles electrons from NAD(P)H:plastoquinone, via FMN and iron-sulfur (Fe-S) centers, to quinones in the photosynthetic chain and possibly in a chloroplast respiratory chain. It has NADH- and deamino-NADH-specific dehydrogenase activity, using ferricyanide or quinones as acceptors. The immediate electron acceptor for the enzyme in this species is believed to be plastoquinone. Couples the redox reaction to proton translocation, and thus conserves the redox energy in a proton gradient. This is NAD(P)H-quinone oxidoreductase subunit K, chloroplastic from Pisum sativum (Garden pea).